The following is a 167-amino-acid chain: uncharacterized protein (167 aa).

The first 25 residues, 1–25 (MPFSVTKFSLIFVALLLAEALVAQS), serve as a signal peptide directing secretion.

This is an uncharacterized protein from Caenorhabditis elegans.